We begin with the raw amino-acid sequence, 762 residues long: MAAPSNTAAVDQLTSDLANANMNGGEKTTVNTNVGASFTGEEIDTAGPTPSSAAPHPQASASLYVGELDPSVTEAMLFELFSQIGSVASIRVCRDAVTRRSLGYAYVNYNTTADGEKALEELNYTLIKGRPCRIMWSQRDPALRKTGQGNVFIKNLDVAIDNKALHDTFAAFGNILSCKVAQDENGNSKGYGFVHYETDEAASQAIKHVNGMLLNEKKVYVGHHIPKKDRQSKFDEMKANFTNIYVKNINPEVTDDEFRTLFEKYGDVTSSSLARDQETGKSRGFGFVNFTSHEDASKAVQELNEKEFHGQNLYVGRAQKKHEREEELRKSYEAARQEKASKYQGVNLYIKNLDDEVDDEKLRQLFSEFGPITSAKVMRDSITEPGEEGESKEGEESEKNKENKPEEKEGDDSKPEEKEGEDSKSKSKLGKSKGFGFVCFANPDDATKAVAEMNQRMVNNKPLYVALAQRKDVRKNQLEQSIQARNQLRMQQAAAAAGMPQQYMQAPVFYGPGSQPGFMPPAGGRGMPYPQGGMPMQPGRPGQFPAGFAAQQGGRGAMPQGIPPMYGLPGQFPPQGPFPQPNNPQFLAAMQQIQQSALAGGRGGPAGRGPMQGGVPVPGMPGGAGLPGFPPNARQQGPGAGRGAAAGRAPAGAPAGARGAGAPEGLQGQLAAVADNPGQQKQILGEAIFPKIQAIHPELAGKITGMLLEMDNTELVALVENDGALRSKVDEALAVYDDYVRQQGDGEGAQAPSKEEKTEEKA.

Residues 39–58 (TGEEIDTAGPTPSSAAPHPQ) are disordered. Low complexity predominate over residues 48-58 (PTPSSAAPHPQ). 4 consecutive RRM domains span residues 61 to 139 (ASLY…WSQR), 149 to 226 (GNVF…HHIP), 242 to 320 (TNIY…RAQK), and 346 to 470 (VNLY…LAQR). Disordered stretches follow at residues 376–429 (KVMR…KSKL), 596–663 (SALA…AGAP), and 740–762 (VRQQ…EEKA). Residues 389–425 (GESKEGEESEKNKENKPEEKEGDDSKPEEKEGEDSKS) are compositionally biased toward basic and acidic residues. Residues 600 to 612 (GGRGGPAGRGPMQ) are compositionally biased toward gly residues. Low complexity predominate over residues 645–663 (AAGRAPAGAPAGARGAGAP). Residues 664–741 (EGLQGQLAAV…ALAVYDDYVR (78 aa)) form the PABC domain. Residues 753–762 (SKEEKTEEKA) show a composition bias toward basic and acidic residues.

The protein belongs to the polyadenylate-binding protein type-1 family.

The protein localises to the cytoplasm. It is found in the nucleus. Functionally, binds the poly(A) tail of mRNA. Appears to be an important mediator of the multiple roles of the poly(A) tail in mRNA biogenesis, stability and translation. In the nucleus, involved in both mRNA cleavage and polyadenylation. Is also required for efficient mRNA export to the cytoplasm. Acts in concert with a poly(A)-specific nuclease (PAN) to affect poly(A) tail shortening, which may occur concomitantly with either nucleocytoplasmic mRNA transport or translational initiation. In the cytoplasm, stimulates translation initiation and regulates mRNA decay through translation termination-coupled poly(A) shortening, probably mediated by PAN. In Pyricularia oryzae (strain 70-15 / ATCC MYA-4617 / FGSC 8958) (Rice blast fungus), this protein is Polyadenylate-binding protein, cytoplasmic and nuclear (PAB1).